A 405-amino-acid chain; its full sequence is GTPase Obg (405 aa).

Positions 1 to 159 (MKFVDEVSIF…RDLKLELKVL (159 aa)) constitute an Obg domain. The interval 127–148 (NTRFKSSTNRAPRQTTPGKPGE) is disordered. Polar residues predominate over residues 129-143 (RFKSSTNRAPRQTTP). The OBG-type G domain maps to 160–333 (ADVGLLGLPN…LCQDIMHYLD (174 aa)). GTP is bound by residues 166-173 (GLPNAGKS), 191-195 (FTTLV), 213-216 (DIPG), 283-286 (NKAD), and 314-316 (SAL). Mg(2+) contacts are provided by Ser-173 and Thr-193. The segment covering 383-398 (ALEDEDDFDDEDDGDG) has biased composition (acidic residues). The disordered stretch occupies residues 383-405 (ALEDEDDFDDEDDGDGPEIFYVR).

This sequence belongs to the TRAFAC class OBG-HflX-like GTPase superfamily. OBG GTPase family. As to quaternary structure, monomer. Mg(2+) serves as cofactor.

It localises to the cytoplasm. Functionally, an essential GTPase which binds GTP, GDP and possibly (p)ppGpp with moderate affinity, with high nucleotide exchange rates and a fairly low GTP hydrolysis rate. Plays a role in control of the cell cycle, stress response, ribosome biogenesis and in those bacteria that undergo differentiation, in morphogenesis control. This is GTPase Obg from Azotobacter vinelandii (strain DJ / ATCC BAA-1303).